The primary structure comprises 141 residues: Transcription antitermination protein NusB (141 aa).

The protein belongs to the NusB family.

Its function is as follows. Involved in transcription antitermination. Required for transcription of ribosomal RNA (rRNA) genes. Binds specifically to the boxA antiterminator sequence of the ribosomal RNA (rrn) operons. The protein is Transcription antitermination protein NusB of Neisseria meningitidis serogroup B (strain ATCC BAA-335 / MC58).